Reading from the N-terminus, the 423-residue chain is Adenosylmethionine-8-amino-7-oxononanoate aminotransferase (423 aa).

W51 provides a ligand contact to substrate. 111–112 (GS) serves as a coordination point for pyridoxal 5'-phosphate. Y144 provides a ligand contact to substrate. D243 contributes to the pyridoxal 5'-phosphate binding site. Substrate contacts are provided by K272 and G306. The residue at position 272 (K272) is an N6-(pyridoxal phosphate)lysine. Residue 307–308 (PT) participates in pyridoxal 5'-phosphate binding. R390 contacts substrate.

It belongs to the class-III pyridoxal-phosphate-dependent aminotransferase family. BioA subfamily. In terms of assembly, homodimer. Pyridoxal 5'-phosphate is required as a cofactor.

Its subcellular location is the cytoplasm. It catalyses the reaction (8S)-8-amino-7-oxononanoate + S-adenosyl-L-methionine = S-adenosyl-4-methylsulfanyl-2-oxobutanoate + (7R,8S)-7,8-diammoniononanoate. It participates in cofactor biosynthesis; biotin biosynthesis; 7,8-diaminononanoate from 8-amino-7-oxononanoate (SAM route): step 1/1. Functionally, catalyzes the transfer of the alpha-amino group from S-adenosyl-L-methionine (SAM) to 7-keto-8-aminopelargonic acid (KAPA) to form 7,8-diaminopelargonic acid (DAPA). It is the only aminotransferase known to utilize SAM as an amino donor. In Corynebacterium glutamicum (strain ATCC 13032 / DSM 20300 / JCM 1318 / BCRC 11384 / CCUG 27702 / LMG 3730 / NBRC 12168 / NCIMB 10025 / NRRL B-2784 / 534), this protein is Adenosylmethionine-8-amino-7-oxononanoate aminotransferase.